The chain runs to 325 residues: uncharacterized protein (325 aa).

One can recognise an HD domain in the interval 49-151; it reads RYEHSIGVML…ELCADRTDYT (103 aa).

This is an uncharacterized protein from Bacillus subtilis (strain 168).